The following is a 549-amino-acid chain: Plant intracellular Ras-group-related LRR protein 4 (549 aa).

The segment covering 119–140 (SPSSNGSVSSRPPLPPATTTAA) has biased composition (low complexity). Residues 119 to 167 (SPSSNGSVSSRPPLPPATTTAARSDSQSSLNFSERAPVRPKDMVSRDDS) form a disordered region. Residues 141-150 (RSDSQSSLNF) are compositionally biased toward polar residues. The segment covering 154–167 (APVRPKDMVSRDDS) has biased composition (basic and acidic residues). A Phosphoserine modification is found at S167. LRR repeat units follow at residues 245-268 (LSSLTSLDLSENHIVVLPNTIGGL), 269-291 (SSLTKLDLHSNRIGQLPESIGEL), 293-313 (NLVYLNLGSNQLSSLPSAFSR), 314-337 (LVRLEELDLSCNNLPILPESIGSL), 339-360 (SLKKLDVETNDIEEIPYSIGGC), 362-383 (SLIELRADYNKLKALPEAIGKI), 384-406 (TTLEILSVRYNNIRQLPTTMSSL), 407-430 (ASLKELDVSFNELESVPESLCFAT), 432-454 (LVKLNIGNNFADMVSLPRSIGNL), 455-476 (EMLEELDISNNQIRVLPDSFKM), and 478-500 (TKLRVFRAQENPLHIPPRDIAEK). Positions 501-508 (GPQAVVQY) match the GVYW; degenerate motif.

Belongs to the SHOC2 family. As to expression, widely expressed.

In terms of biological role, leucine-rich repeat protein that likely mediates protein interactions, possibly in the context of signal transduction. This Arabidopsis thaliana (Mouse-ear cress) protein is Plant intracellular Ras-group-related LRR protein 4 (PIRL4).